The primary structure comprises 369 residues: 3-dehydroquinate synthase (369 aa).

NAD(+) contacts are provided by residues 110–114 (GVIGD), 134–135 (TT), lysine 147, lysine 156, and 174–177 (TLKT). Zn(2+)-binding residues include glutamate 189, histidine 254, and histidine 271.

Belongs to the sugar phosphate cyclases superfamily. Dehydroquinate synthase family. Co(2+) is required as a cofactor. Zn(2+) serves as cofactor. The cofactor is NAD(+).

It localises to the cytoplasm. It catalyses the reaction 7-phospho-2-dehydro-3-deoxy-D-arabino-heptonate = 3-dehydroquinate + phosphate. It participates in metabolic intermediate biosynthesis; chorismate biosynthesis; chorismate from D-erythrose 4-phosphate and phosphoenolpyruvate: step 2/7. Functionally, catalyzes the conversion of 3-deoxy-D-arabino-heptulosonate 7-phosphate (DAHP) to dehydroquinate (DHQ). The chain is 3-dehydroquinate synthase from Cyanothece sp. (strain PCC 7425 / ATCC 29141).